Reading from the N-terminus, the 541-residue chain is Glucose-6-phosphate isomerase (541 aa).

The active-site Proton donor is the glutamate 346. Residues histidine 377 and lysine 506 contribute to the active site.

The protein belongs to the GPI family.

Its subcellular location is the cytoplasm. The catalysed reaction is alpha-D-glucose 6-phosphate = beta-D-fructose 6-phosphate. It functions in the pathway carbohydrate biosynthesis; gluconeogenesis. Its pathway is carbohydrate degradation; glycolysis; D-glyceraldehyde 3-phosphate and glycerone phosphate from D-glucose: step 2/4. Its function is as follows. Catalyzes the reversible isomerization of glucose-6-phosphate to fructose-6-phosphate. The chain is Glucose-6-phosphate isomerase from Rhizobium rhizogenes (strain K84 / ATCC BAA-868) (Agrobacterium radiobacter).